Reading from the N-terminus, the 354-residue chain is Uroporphyrinogen decarboxylase (354 aa).

Substrate is bound by residues 27-31 (RQAGR), D77, Y154, T209, and H327.

This sequence belongs to the uroporphyrinogen decarboxylase family. In terms of assembly, homodimer.

The protein resides in the cytoplasm. The enzyme catalyses uroporphyrinogen III + 4 H(+) = coproporphyrinogen III + 4 CO2. It participates in porphyrin-containing compound metabolism; protoporphyrin-IX biosynthesis; coproporphyrinogen-III from 5-aminolevulinate: step 4/4. Functionally, catalyzes the decarboxylation of four acetate groups of uroporphyrinogen-III to yield coproporphyrinogen-III. The chain is Uroporphyrinogen decarboxylase from Salmonella newport (strain SL254).